The chain runs to 633 residues: Kelch repeat and BTB domain-containing protein 11 (633 aa).

Residues 1–118 (MENSVAPFVL…EDPPSRHEHA (118 aa)) form a disordered region. Positions 35–60 (STAQTPCSLSASLCFSSGDDSPPQSR) are enriched in polar residues. The segment covering 61–73 (ASAAEGSEASPPS) has biased composition (low complexity). A phosphoserine mark is found at Ser70, Ser73, Ser92, Ser95, Ser107, and Ser113. The BTB domain maps to 146-206 (PDLVIEVAGR…AYSGRMAGVR (61 aa)). Kelch repeat units follow at residues 317-365 (RPQS…VLFN), 366-418 (YLFL…ALDG), 419-463 (HLYA…TCNG), and 465-506 (IYVS…ALDG).

This chain is Kelch repeat and BTB domain-containing protein 11 (Kbtbd11), found in Mus musculus (Mouse).